The primary structure comprises 209 residues: Na(+)-translocating NADH-quinone reductase subunit D (209 aa).

5 helical membrane passes run 42–62 (LVMT…ISLI), 66–86 (IPGS…VIVV), 103–123 (VFVG…AYAM), 131–151 (FMDG…VGFL), and 178–198 (NGLF…IWGL).

This sequence belongs to the NqrDE/RnfAE family. As to quaternary structure, composed of six subunits; NqrA, NqrB, NqrC, NqrD, NqrE and NqrF.

Its subcellular location is the cell inner membrane. The catalysed reaction is a ubiquinone + n Na(+)(in) + NADH + H(+) = a ubiquinol + n Na(+)(out) + NAD(+). NQR complex catalyzes the reduction of ubiquinone-1 to ubiquinol by two successive reactions, coupled with the transport of Na(+) ions from the cytoplasm to the periplasm. NqrA to NqrE are probably involved in the second step, the conversion of ubisemiquinone to ubiquinol. This chain is Na(+)-translocating NADH-quinone reductase subunit D, found in Proteus mirabilis (strain HI4320).